Reading from the N-terminus, the 213-residue chain is ATP phosphoribosyltransferase (213 aa).

It belongs to the ATP phosphoribosyltransferase family. Short subfamily. Heteromultimer composed of HisG and HisZ subunits.

It is found in the cytoplasm. The catalysed reaction is 1-(5-phospho-beta-D-ribosyl)-ATP + diphosphate = 5-phospho-alpha-D-ribose 1-diphosphate + ATP. It participates in amino-acid biosynthesis; L-histidine biosynthesis; L-histidine from 5-phospho-alpha-D-ribose 1-diphosphate: step 1/9. Its function is as follows. Catalyzes the condensation of ATP and 5-phosphoribose 1-diphosphate to form N'-(5'-phosphoribosyl)-ATP (PR-ATP). Has a crucial role in the pathway because the rate of histidine biosynthesis seems to be controlled primarily by regulation of HisG enzymatic activity. In Bacillus pumilus (strain SAFR-032), this protein is ATP phosphoribosyltransferase.